The primary structure comprises 255 residues: Triosephosphate isomerase (255 aa).

A substrate-binding site is contributed by Asn-10–Lys-12. His-96 functions as the Electrophile in the catalytic mechanism. The active-site Proton acceptor is Glu-168. Residues Gly-174, Ser-213, and Gly-234–Gly-235 contribute to the substrate site.

This sequence belongs to the triosephosphate isomerase family. As to quaternary structure, homodimer.

The protein resides in the cytoplasm. It catalyses the reaction D-glyceraldehyde 3-phosphate = dihydroxyacetone phosphate. It participates in carbohydrate biosynthesis; gluconeogenesis. Its pathway is carbohydrate degradation; glycolysis; D-glyceraldehyde 3-phosphate from glycerone phosphate: step 1/1. In terms of biological role, involved in the gluconeogenesis. Catalyzes stereospecifically the conversion of dihydroxyacetone phosphate (DHAP) to D-glyceraldehyde-3-phosphate (G3P). This chain is Triosephosphate isomerase, found in Histophilus somni (strain 2336) (Haemophilus somnus).